Here is a 265-residue protein sequence, read N- to C-terminus: Polyphosphate glucokinase (265 aa).

Polar residues predominate over residues 1-18; sequence MTSTGPETSETPGATTQR. The disordered stretch occupies residues 1–22; that stretch reads MTSTGPETSETPGATTQRHGFG. 24–29 contacts ATP; it reads DVGGSG.

Belongs to the ROK (NagC/XylR) family. In terms of assembly, homodimer.

It carries out the reaction [phosphate](n) + D-glucose = [phosphate](n-1) + D-glucose 6-phosphate + H(+). It catalyses the reaction D-glucose + ATP = D-glucose 6-phosphate + ADP + H(+). Functionally, catalyzes the phosphorylation of glucose using polyphosphate or ATP as the phosphoryl donor. Polyphosphate, rather than ATP, seems to be the major phosphate donor for the enzyme in M.tuberculosis. GTP, UTP and CTP can replace ATP as phosphoryl donor. This is Polyphosphate glucokinase (ppgK) from Mycobacterium tuberculosis (strain ATCC 25177 / H37Ra).